The sequence spans 204 residues: Large ribosomal subunit protein uL18 (204 aa).

Belongs to the universal ribosomal protein uL18 family. Part of the 50S ribosomal subunit. Contacts the 5S and 23S rRNAs.

Its function is as follows. This is one of the proteins that bind and probably mediate the attachment of the 5S RNA into the large ribosomal subunit, where it forms part of the central protuberance. This is Large ribosomal subunit protein uL18 from Ignicoccus hospitalis (strain KIN4/I / DSM 18386 / JCM 14125).